The following is a 362-amino-acid chain: Alcohol dehydrogenase 13 (362 aa).

The Zn(2+) site is built by cysteine 51, histidine 73, cysteine 104, cysteine 107, cysteine 110, cysteine 118, and cysteine 168. Histidine 73 provides a ligand contact to substrate. NAD(+)-binding positions include 193–198 (GLGGLG) and 280–282 (VGA).

It belongs to the zinc-containing alcohol dehydrogenase family. Class-III subfamily. As to quaternary structure, homodimer. It depends on Zn(2+) as a cofactor.

The polypeptide is Alcohol dehydrogenase 13 (Catharanthus roseus (Madagascar periwinkle)).